The chain runs to 467 residues: Asparagine--tRNA ligase (467 aa).

It belongs to the class-II aminoacyl-tRNA synthetase family. As to quaternary structure, homodimer.

The protein localises to the cytoplasm. The enzyme catalyses tRNA(Asn) + L-asparagine + ATP = L-asparaginyl-tRNA(Asn) + AMP + diphosphate + H(+). The chain is Asparagine--tRNA ligase from Haemophilus influenzae (strain ATCC 51907 / DSM 11121 / KW20 / Rd).